The primary structure comprises 197 residues: UPF0301 protein AnaeK_4073 (197 aa).

It belongs to the UPF0301 (AlgH) family.

The chain is UPF0301 protein AnaeK_4073 from Anaeromyxobacter sp. (strain K).